A 663-amino-acid polypeptide reads, in one-letter code: DNA topoisomerase 4 subunit B (663 aa).

Residues Y7, N47, D74, 114 to 120 (GLHGVGA), and K341 contribute to the ATP site. A disordered region spans residues 386 to 418 (REAARKAREDARSGKKNKRKDTLLSGKLTPAQS). Basic and acidic residues predominate over residues 387 to 398 (EAARKAREDARS). The Toprim domain maps to 424–538 (NELYLVEGDS…AGRVFIALPP (115 aa)). Positions 430, 503, and 505 each coordinate Mg(2+).

This sequence belongs to the type II topoisomerase family. ParE type 2 subfamily. As to quaternary structure, heterotetramer composed of ParC and ParE. It depends on Mg(2+) as a cofactor. Requires Mn(2+) as cofactor. Ca(2+) is required as a cofactor.

The catalysed reaction is ATP-dependent breakage, passage and rejoining of double-stranded DNA.. Its function is as follows. Topoisomerase IV is essential for chromosome segregation. It relaxes supercoiled DNA. Performs the decatenation events required during the replication of a circular DNA molecule. In Staphylococcus aureus (strain MRSA252), this protein is DNA topoisomerase 4 subunit B.